The primary structure comprises 194 residues: Crossover junction endodeoxyribonuclease RuvC (194 aa).

Residues Asp8, Glu72, and Asp144 contribute to the active site. Residues Asp8, Glu72, and Asp144 each contribute to the Mg(2+) site.

This sequence belongs to the RuvC family. Homodimer which binds Holliday junction (HJ) DNA. The HJ becomes 2-fold symmetrical on binding to RuvC with unstacked arms; it has a different conformation from HJ DNA in complex with RuvA. In the full resolvosome a probable DNA-RuvA(4)-RuvB(12)-RuvC(2) complex forms which resolves the HJ. Requires Mg(2+) as cofactor.

It localises to the cytoplasm. The catalysed reaction is Endonucleolytic cleavage at a junction such as a reciprocal single-stranded crossover between two homologous DNA duplexes (Holliday junction).. Functionally, the RuvA-RuvB-RuvC complex processes Holliday junction (HJ) DNA during genetic recombination and DNA repair. Endonuclease that resolves HJ intermediates. Cleaves cruciform DNA by making single-stranded nicks across the HJ at symmetrical positions within the homologous arms, yielding a 5'-phosphate and a 3'-hydroxyl group; requires a central core of homology in the junction. The consensus cleavage sequence is 5'-(A/T)TT(C/G)-3'. Cleavage occurs on the 3'-side of the TT dinucleotide at the point of strand exchange. HJ branch migration catalyzed by RuvA-RuvB allows RuvC to scan DNA until it finds its consensus sequence, where it cleaves and resolves the cruciform DNA. The polypeptide is Crossover junction endodeoxyribonuclease RuvC (Psychrobacter arcticus (strain DSM 17307 / VKM B-2377 / 273-4)).